Here is a 123-residue protein sequence, read N- to C-terminus: Large ribosomal subunit protein bL17 (123 aa).

It belongs to the bacterial ribosomal protein bL17 family. In terms of assembly, part of the 50S ribosomal subunit. Contacts protein L32.

In Mycoplasma genitalium (strain ATCC 33530 / DSM 19775 / NCTC 10195 / G37) (Mycoplasmoides genitalium), this protein is Large ribosomal subunit protein bL17.